The sequence spans 329 residues: GTPase Obg (329 aa).

Residues 1-159 (MQFIDQARIS…WPLQLELKLL (159 aa)) enclose the Obg domain. The OBG-type G domain maps to 160–328 (AEVGIIGLPN…MLDRVWSELG (169 aa)). ATP-binding positions include 166 to 173 (GLPNAGKS), 191 to 195 (FTTLI), 213 to 216 (DIPG), 280 to 283 (NKQE), and 309 to 311 (SAA). Residues S173 and T193 each contribute to the Mg(2+) site.

It belongs to the TRAFAC class OBG-HflX-like GTPase superfamily. OBG GTPase family. In terms of assembly, monomer. Requires Mg(2+) as cofactor.

The protein localises to the cytoplasm. An essential GTPase which binds GTP, GDP and possibly (p)ppGpp with moderate affinity, with high nucleotide exchange rates and a fairly low GTP hydrolysis rate. Plays a role in control of the cell cycle, stress response, ribosome biogenesis and in those bacteria that undergo differentiation, in morphogenesis control. The polypeptide is GTPase Obg (Synechococcus sp. (strain CC9311)).